Reading from the N-terminus, the 54-residue chain is Photoreceptor disk component PRCD (54 aa).

A lipid anchor (S-palmitoyl cysteine) is attached at Cys2. Residues 24–54 are disordered; it reads QPEPSGADGAVVGSRSERDLQSSGRKEEPLK. The span at 38 to 54 shows a compositional bias: basic and acidic residues; sequence RSERDLQSSGRKEEPLK.

Belongs to the PRCD family. Interacts with RHO/rhodopsin; the interaction promotes PRCD stability. Palmitoylated at Cys-2. Palmitoylation is essential for protein stability and trafficking to the photoreceptor outer segment, but does not appear to be essential for membrane localization. Probably palmitoylated by ZDHHC3. Post-translationally, phosphorylated. As to expression, expressed in retina.

It is found in the cell projection. The protein localises to the cilium. Its subcellular location is the photoreceptor outer segment. It localises to the membrane. The protein resides in the endoplasmic reticulum. It is found in the golgi apparatus. Involved in vision. The polypeptide is Photoreceptor disk component PRCD (Canis lupus familiaris (Dog)).